Consider the following 214-residue polypeptide: MLTVALPKGELLKNSIRLLQSVGLDFSAFLDSGTRQLQIPDTKGLAKALLVRAQDVPVYVEYGQAQLGVVGYDVLREKQPQVAHLVDLQFGYCRMSVAVKASSSYRSPLDLPPHGRVASKYVNCAREYFHSLDLPVEIVPLYGSVELGPITGMSEAIVDLVSTGRTMRENGLIEIATLYESTARLIAHPLSYRMNTGNLSDVIAKLREAVLVEV.

This sequence belongs to the ATP phosphoribosyltransferase family. Short subfamily. As to quaternary structure, heteromultimer composed of HisG and HisZ subunits.

It is found in the cytoplasm. It catalyses the reaction 1-(5-phospho-beta-D-ribosyl)-ATP + diphosphate = 5-phospho-alpha-D-ribose 1-diphosphate + ATP. It functions in the pathway amino-acid biosynthesis; L-histidine biosynthesis; L-histidine from 5-phospho-alpha-D-ribose 1-diphosphate: step 1/9. Catalyzes the condensation of ATP and 5-phosphoribose 1-diphosphate to form N'-(5'-phosphoribosyl)-ATP (PR-ATP). Has a crucial role in the pathway because the rate of histidine biosynthesis seems to be controlled primarily by regulation of HisG enzymatic activity. The sequence is that of ATP phosphoribosyltransferase from Nostoc punctiforme (strain ATCC 29133 / PCC 73102).